Reading from the N-terminus, the 603-residue chain is NADH-ubiquinone oxidoreductase chain 5 (603 aa).

16 consecutive transmembrane segments (helical) span residues 4-24 (FTTMTALTLTSLIPPITATLI), 38-58 (TAIASAFTISLIPTTMFICLG), 89-109 (FLPVALFVTWSIMEFSLWYMA), 122-142 (LIFLITMIILITANNLLQLFI), 171-191 (AILYNRIGDIGFILTLAWFLL), 211-233 (LPLLGLLLAAAGKSAQLGLHPWL), 241-261 (TPVSALLHSSTMVVAGIFLLI), 273-293 (IQTLALCLGAITTLFAAICAL), 301-320 (IVAFSTSSQLGLMMVTIGIN), 325-347 (AFLHICTHAFFKALLFMCSGSII), 366-386 (MPLTSTSLTISSLALAGMPFL), 405-424 (NAWALSITLIATSLTSAYST), 457-477 (LMTGSLFTGFLITSNIPPTSL), 488-508 (LAALTATLLGLLVALDLNYLA), 537-557 (IPHLSLLMSQNLSLLLLDLTW), and 582-602 (GMIKLYFLSFLIPLLLTLLMI).

This sequence belongs to the complex I subunit 5 family. As to quaternary structure, core subunit of respiratory chain NADH dehydrogenase (Complex I) which is composed of 45 different subunits.

The protein resides in the mitochondrion inner membrane. The enzyme catalyses a ubiquinone + NADH + 5 H(+)(in) = a ubiquinol + NAD(+) + 4 H(+)(out). In terms of biological role, core subunit of the mitochondrial membrane respiratory chain NADH dehydrogenase (Complex I) which catalyzes electron transfer from NADH through the respiratory chain, using ubiquinone as an electron acceptor. Essential for the catalytic activity and assembly of complex I. The polypeptide is NADH-ubiquinone oxidoreductase chain 5 (MT-ND5) (Pongo pygmaeus (Bornean orangutan)).